Here is a 520-residue protein sequence, read N- to C-terminus: Maturase K (520 aa).

Belongs to the intron maturase 2 family. MatK subfamily.

It localises to the plastid. The protein resides in the chloroplast. Its function is as follows. Usually encoded in the trnK tRNA gene intron. Probably assists in splicing its own and other chloroplast group II introns. The protein is Maturase K of Linum perenne (Perennial flax).